The chain runs to 583 residues: Pescadillo (583 aa).

The stretch at 275–329 (EKLSALSASLARMVASVEEEEAELDHFPTEGEDQEKMEVREKMEQQQSKQKKLFE) forms a coiled coil. Positions 323 to 416 (KQKKLFEGLK…IQLPVEEYFL (94 aa)) constitute a BRCT domain. Disordered stretches follow at residues 448 to 526 (RGEK…EEKA) and 558 to 583 (ANKLAAKRKAHDDASKADKKKKKKKC). Positions 455–489 (EEDEEEEGEEEEDDEEDEEDDEQSEDEEEAEEEAN) are enriched in acidic residues. The segment covering 512 to 526 (AKAENRARAAEEEKA) has biased composition (basic and acidic residues).

Belongs to the pescadillo family. In terms of assembly, component of the PeBoW complex, composed of bop1, pes1 and wdr12. The complex is held together by bop1, which interacts with pes1 via its N-terminal domain and with wdr12 via a high-affinity interaction between the seven-bladed beta-propeller domains of the 2 proteins. The PeBoW complex associates with the 66S pre-ribosome.

The protein localises to the nucleus. It is found in the nucleolus. Its subcellular location is the nucleoplasm. Functionally, component of the PeBoW complex, which is required for maturation of 28S and 5.8S ribosomal RNAs and formation of the 60S ribosome. This chain is Pescadillo (pes), found in Danio rerio (Zebrafish).